A 131-amino-acid polypeptide reads, in one-letter code: Hydrophilin PGA14 (131 aa).

The first 18 residues, 1-18 (MKFTTVATVFAISSLAAA), serve as a signal peptide directing secretion. Basic and acidic residues-rich tracts occupy residues 42–59 (YGRF…ETGT) and 79–96 (KESD…RDSK). Residues 42–110 (YGRFDKTSRS…NSTTSSGNNG (69 aa)) are disordered. Residues N97 and N101 are each glycosylated (N-linked (GlcNAc...) asparagine). Positions 97–110 (NASSNSTTSSGNNG) are enriched in low complexity. The GPI-anchor amidated serine moiety is linked to residue S105. Residues 106–131 (SGNNGVATGVSLGLAGVLAVGAALVI) constitute a propeptide, removed in mature form.

This sequence belongs to the PGA14 family. Post-translationally, the GPI-anchor is attached to the protein in the endoplasmic reticulum and serves to target the protein to the cell surface. There, the glucosamine-inositol phospholipid moiety is cleaved off and the GPI-modified mannoprotein is covalently attached via its lipidless GPI glycan remnant to the 1,6-beta-glucan of the outer cell wall layer.

It localises to the secreted. Its subcellular location is the cell wall. The protein resides in the membrane. Hydrophilin which is essential to overcome the simple stress of the desiccation-rehydration process. This chain is Hydrophilin PGA14 (PGA14), found in Candida albicans (strain SC5314 / ATCC MYA-2876) (Yeast).